Consider the following 254-residue polypeptide: tRNA (guanine-N(7)-)-methyltransferase (254 aa).

S-adenosyl-L-methionine contacts are provided by Glu-82, Glu-107, Asp-134, and Asp-157. The active site involves Asp-157. Substrate contacts are provided by residues Lys-161, Asp-193, and 233–236 (TKFE).

The protein belongs to the class I-like SAM-binding methyltransferase superfamily. TrmB family.

The enzyme catalyses guanosine(46) in tRNA + S-adenosyl-L-methionine = N(7)-methylguanosine(46) in tRNA + S-adenosyl-L-homocysteine. It functions in the pathway tRNA modification; N(7)-methylguanine-tRNA biosynthesis. Catalyzes the formation of N(7)-methylguanine at position 46 (m7G46) in tRNA. This is tRNA (guanine-N(7)-)-methyltransferase from Corynebacterium jeikeium (strain K411).